We begin with the raw amino-acid sequence, 297 residues long: Octopine catabolism/uptake operon regulatory protein OccR (297 aa).

An HTH lysR-type domain is found at 1 to 58 (MNLRQVEAFRAVMLTGQMTAAAELMLVTQPAISRLIKDFERATKLQLFERRGNHIIPT). Positions 18-37 (MTAAAELMLVTQPAISRLIK) form a DNA-binding region, H-T-H motif.

It belongs to the LysR transcriptional regulatory family.

Positive regulatory protein for the occ operon involved in octopine catabolism and uptake. Also acts as a negative regulator of its expression. The protein is Octopine catabolism/uptake operon regulatory protein OccR (occR) of Rhizobium meliloti (Ensifer meliloti).